Consider the following 1341-residue polypeptide: Pleckstrin homology domain-containing family G member 3 (1341 aa).

Residues 1 to 68 (MPVSTALHQD…PNSNNNSSGW (68 aa)) are disordered. Over residues 18 to 29 (SLVSTTSSSGSS) the composition is skewed to low complexity. 2 stretches are compositionally biased toward polar residues: residues 42–51 (SEASAQNGTG) and 59–68 (PNSNNNSSGW). Phosphoserine is present on Ser76. The region spanning 93–272 (YLGRVVREIV…TCVAWYINDM (180 aa)) is the DH domain. The PH domain maps to 296 to 394 (DLTTYGELVL…WTHHIKRLIL (99 aa)). Phosphoserine occurs at positions 433 and 502. The interval 433–482 (SQDEVSSHVRQGRRQSEPGHTLFSRATLPSRQQGFEMPGLKGRRKSEPTR) is disordered. Disordered stretches follow at residues 508–657 (DFGQ…EFPE) and 684–715 (PEGS…LLPP). Composition is skewed to acidic residues over residues 529 to 541 (ELEE…EEEE) and 570 to 580 (GSEEEEEEEES). Phosphoserine occurs at positions 571, 694, 695, 737, 759, 762, and 766. Residues 695 to 707 (SEEEEEEEMEAAQ) are compositionally biased toward acidic residues. The interval 775–832 (SIGDSLSNPPTPEVIIGADMVTDNGPSVNGTESPSAGSGCPTEQDRSSCKKKESALST) is disordered. Positions 798-810 (NGPSVNGTESPSA) are enriched in polar residues. Over residues 817 to 832 (EQDRSSCKKKESALST) the composition is skewed to basic and acidic residues. Phosphoserine is present on residues Ser862, Ser899, Ser900, and Ser947. Disordered stretches follow at residues 876-930 (SRFN…EFCP), 939-958 (ERME…SQAN), 1071-1097 (KVTP…SGGK), and 1117-1162 (HGTS…PFDT). Residues 939 to 948 (ERMESSERSP) show a composition bias toward basic and acidic residues. Over residues 949–958 (RTGSGQSQAN) the composition is skewed to polar residues. Phosphoserine is present on residues Ser1129, Ser1134, Ser1136, Ser1141, Ser1155, Ser1158, and Ser1201. Residues 1135–1162 (FSPSAVSPRTTSPGARSSARSPLSPFDT) show a composition bias toward polar residues. Disordered stretches follow at residues 1204 to 1249 (ENIV…LNGG) and 1271 to 1341 (KGPH…NSVG). Positions 1309–1320 (QPKEHGPRDSAD) are enriched in basic and acidic residues.

Its subcellular location is the cytoplasm. The protein resides in the cytoskeleton. Functionally, plays a role in controlling cell polarity and cell motility by selectively binding newly polymerized actin and activating RAC1 and CDC42 to enhance local actin polymerization. The sequence is that of Pleckstrin homology domain-containing family G member 3 from Mus musculus (Mouse).